The primary structure comprises 148 residues: Large ribosomal subunit protein bL19 (148 aa).

It belongs to the bacterial ribosomal protein bL19 family.

Its function is as follows. This protein is located at the 30S-50S ribosomal subunit interface and may play a role in the structure and function of the aminoacyl-tRNA binding site. This Paramagnetospirillum magneticum (strain ATCC 700264 / AMB-1) (Magnetospirillum magneticum) protein is Large ribosomal subunit protein bL19.